Here is a 363-residue protein sequence, read N- to C-terminus: NAD(P)H-quinone oxidoreductase subunit 1, chloroplastic (363 aa).

Helical transmembrane passes span 30–50 (FLPI…IVWL), 104–124 (IAVI…HLVL), 129–149 (IGVF…LMSG), 248–268 (YSGI…LVSS), 300–320 (VFGT…FLFI), and 343–363 (FLLP…LLSL).

It belongs to the complex I subunit 1 family. As to quaternary structure, NDH is composed of at least 16 different subunits, 5 of which are encoded in the nucleus.

The protein localises to the plastid. Its subcellular location is the chloroplast thylakoid membrane. It carries out the reaction a plastoquinone + NADH + (n+1) H(+)(in) = a plastoquinol + NAD(+) + n H(+)(out). The catalysed reaction is a plastoquinone + NADPH + (n+1) H(+)(in) = a plastoquinol + NADP(+) + n H(+)(out). In terms of biological role, NDH shuttles electrons from NAD(P)H:plastoquinone, via FMN and iron-sulfur (Fe-S) centers, to quinones in the photosynthetic chain and possibly in a chloroplast respiratory chain. The immediate electron acceptor for the enzyme in this species is believed to be plastoquinone. Couples the redox reaction to proton translocation, and thus conserves the redox energy in a proton gradient. This is NAD(P)H-quinone oxidoreductase subunit 1, chloroplastic from Eucalyptus globulus subsp. globulus (Tasmanian blue gum).